The sequence spans 422 residues: Histidine--tRNA ligase (422 aa).

Belongs to the class-II aminoacyl-tRNA synthetase family. As to quaternary structure, homodimer.

The protein resides in the cytoplasm. The catalysed reaction is tRNA(His) + L-histidine + ATP = L-histidyl-tRNA(His) + AMP + diphosphate + H(+). In Vibrio vulnificus (strain CMCP6), this protein is Histidine--tRNA ligase.